An 823-amino-acid polypeptide reads, in one-letter code: Kinesin-like protein KIN-7N (823 aa).

The 323-residue stretch at 3–325 folds into the Kinesin motor domain; sequence KICVAVRVRP…LQFASRAKRI (323 aa). 83 to 90 provides a ligand contact to ATP; it reads GQTSSGKT. 3 coiled-coil regions span residues 341 to 414, 527 to 557, and 696 to 786; these read LKRQ…NLNN, RENH…FNEQ, and EKKL…MEEE.

Belongs to the TRAFAC class myosin-kinesin ATPase superfamily. Kinesin family. KIN-7 subfamily.

The protein is Kinesin-like protein KIN-7N of Arabidopsis thaliana (Mouse-ear cress).